The sequence spans 465 residues: ATP synthase subunit beta (465 aa).

152–159 (GGAGVGKT) contributes to the ATP binding site.

The protein belongs to the ATPase alpha/beta chains family. As to quaternary structure, F-type ATPases have 2 components, CF(1) - the catalytic core - and CF(0) - the membrane proton channel. CF(1) has five subunits: alpha(3), beta(3), gamma(1), delta(1), epsilon(1). CF(0) has three main subunits: a(1), b(2) and c(9-12). The alpha and beta chains form an alternating ring which encloses part of the gamma chain. CF(1) is attached to CF(0) by a central stalk formed by the gamma and epsilon chains, while a peripheral stalk is formed by the delta and b chains.

The protein localises to the cell membrane. The enzyme catalyses ATP + H2O + 4 H(+)(in) = ADP + phosphate + 5 H(+)(out). In terms of biological role, produces ATP from ADP in the presence of a proton gradient across the membrane. The catalytic sites are hosted primarily by the beta subunits. The sequence is that of ATP synthase subunit beta from Desulfitobacterium hafniense (strain Y51).